We begin with the raw amino-acid sequence, 362 residues long: Divinyl chlorophyll a/b light-harvesting protein PcbF (362 aa).

A run of 6 helical transmembrane segments spans residues 27–47 (FIGS…ANTL), 89–109 (IAFI…AGLL), 150–170 (FILG…VEWA), 211–231 (VMGG…FHIA), 251–271 (AVLS…AFWC), and 316–336 (LANV…WHAI).

The protein belongs to the PsbB/PsbC family. IsiA/Pcb subfamily. The antenna complex consists of divinyl chlorophylls (a and b) and divinyl chlorophyll a/b binding proteins and binds more divinyl chlorophyll b than does the antenna complex from high-light-adapted Prochlorococcus. It depends on divinyl chlorophyll a as a cofactor. The cofactor is divinyl chlorophyll b.

It is found in the cellular thylakoid membrane. In terms of biological role, the antenna complex functions as a light receptor, it captures and delivers excitation energy to photosystems II and I. The Prochlorales pcb genes are not related to higher plant LHCs. This is Divinyl chlorophyll a/b light-harvesting protein PcbF (pcbF) from Prochlorococcus marinus (strain NATL2A).